A 570-amino-acid chain; its full sequence is Chaperonin GroEL 1 (570 aa).

ATP-binding positions include 42–45 (TLGP), Lys63, 99–103 (DGTTT), Gly427, and Asp507. The disordered stretch occupies residues 537-570 (EDEDDDDGGGGGGGGMPAGGAGGMGGMGGMGGMM). The span at 545 to 570 (GGGGGGGMPAGGAGGMGGMGGMGGMM) shows a compositional bias: gly residues.

It belongs to the chaperonin (HSP60) family. As to quaternary structure, forms a cylinder of 14 subunits composed of two heptameric rings stacked back-to-back. Interacts with the co-chaperonin GroES.

The protein localises to the cytoplasm. It carries out the reaction ATP + H2O + a folded polypeptide = ADP + phosphate + an unfolded polypeptide.. Together with its co-chaperonin GroES, plays an essential role in assisting protein folding. The GroEL-GroES system forms a nano-cage that allows encapsulation of the non-native substrate proteins and provides a physical environment optimized to promote and accelerate protein folding. The sequence is that of Chaperonin GroEL 1 from Salinibacter ruber (strain DSM 13855 / M31).